Consider the following 241-residue polypeptide: Glutathione S-transferase omega-1 (241 aa).

The residue at position 2 (Ser2) is an N-acetylserine. Positions 22–101 constitute a GST N-terminal domain; that stretch reads GSIRIYSMRF…YLDEAYPGKK (80 aa). The active-site Nucleophile is the Cys32. Lys57 carries the N6-acetyllysine modification. Glutathione contacts are provided by residues Lys59, Val72, and 85–86; that span reads ES. Residues 106 to 230 form the GST C-terminal domain; the sequence is DPYEKACQKM…DWQGFLELYL (125 aa). Ser129 carries the phosphoserine modification. 3 positions are modified to N6-acetyllysine: Lys143, Lys148, and Lys152.

This sequence belongs to the GST superfamily. Omega family. As to quaternary structure, homodimer. In terms of tissue distribution, ubiquitous. Highest expression in liver, pancreas, skeletal muscle, spleen, thymus, colon, blood leukocyte and heart. Lowest expression in brain, placenta and lung.

The protein resides in the cytoplasm. Its subcellular location is the cytosol. It carries out the reaction RX + glutathione = an S-substituted glutathione + a halide anion + H(+). The enzyme catalyses L-dehydroascorbate + 2 glutathione = glutathione disulfide + L-ascorbate. The catalysed reaction is methylarsonate + 2 glutathione + H(+) = methylarsonous acid + glutathione disulfide + H2O. Monomethylarsonic acid reductase activity is competitively inhibited by 1-chloro 2,4-dinitrobenzene (CDNB) and by deoxycholate. Exhibits glutathione-dependent thiol transferase and dehydroascorbate reductase activities. Has S-(phenacyl)glutathione reductase activity. Also has glutathione S-transferase activity. Participates in the biotransformation of inorganic arsenic and reduces monomethylarsonic acid (MMA) and dimethylarsonic acid. The protein is Glutathione S-transferase omega-1 (GSTO1) of Homo sapiens (Human).